The chain runs to 609 residues: Laccase-1 (609 aa).

The N-terminal stretch at 1–20 (MYLSTVLFPLLALNLGLSHA) is a signal peptide. Positions 45–141 (VFTNGEYPGP…DGQVGAMYIR (97 aa)) constitute a Plastocyanin-like 1 domain. N-linked (GlcNAc...) asparagine glycosylation occurs at asparagine 75. The Cu cation site is built by histidine 79, histidine 81, histidine 123, and histidine 125. Asparagine 257 carries an N-linked (GlcNAc...) asparagine glycan. A Plastocyanin-like 2 domain is found at 270-372 (TPSSVEPPVI…MSVYAILSYV (103 aa)). 3 N-linked (GlcNAc...) asparagine glycosylation sites follow: asparagine 403, asparagine 443, and asparagine 486. A Plastocyanin-like 3 domain is found at 463 to 602 (STPLLFEPDP…MGGMALALLD (140 aa)). Residues histidine 508, histidine 511, and histidine 513 each contribute to the Cu cation site. N-linked (GlcNAc...) asparagine glycosylation is found at asparagine 531 and asparagine 546. Residues histidine 585, cysteine 586, histidine 587, and histidine 591 each contribute to the Cu cation site.

Belongs to the multicopper oxidase family. The cofactor is Cu cation.

It localises to the secreted. The enzyme catalyses 4 hydroquinone + O2 = 4 benzosemiquinone + 2 H2O. Its function is as follows. Required for the conversion of the yellow polyketide pigment synthesized by wA to the conidial green pigment. The chain is Laccase-1 (yA) from Emericella nidulans (strain FGSC A4 / ATCC 38163 / CBS 112.46 / NRRL 194 / M139) (Aspergillus nidulans).